The sequence spans 102 residues: Small ribosomal subunit protein uS10 (102 aa).

The protein belongs to the universal ribosomal protein uS10 family. As to quaternary structure, part of the 30S ribosomal subunit.

Functionally, involved in the binding of tRNA to the ribosomes. This is Small ribosomal subunit protein uS10 from Trichlorobacter lovleyi (strain ATCC BAA-1151 / DSM 17278 / SZ) (Geobacter lovleyi).